The primary structure comprises 347 residues: Metacaspase-2 (347 aa).

The segment at 1–70 (MCSLITQLCD…QPWVATPLPG (70 aa)) is regulates substrate access to the active site. Histidine 158 is a catalytic residue. Positions 173, 189, and 190 each coordinate Ca(2+). The active site involves cysteine 213. Aspartate 220 serves as a coordination point for Ca(2+).

Belongs to the peptidase C14B family. In terms of assembly, monomer. Auto-proteolytic cleavage of the propeptide after Lys-55 and between the large and small subunits after Lys-268 is required for catalytic activity towards large protein substrates but is dispensable towards small oligopeptide substrates. After processing, the propeptide and the large and small subunits remain associated by non-covalent bonds. In vivo, the unprocessed enzyme appears to be the predominant form.

It is found in the recycling endosome. Activated by Ca(2+). In response to calcium binding, the 280-loop, the 280-loop, a disordered loop consisting of residues 269-275, undergoes a conformational change which stabilizes substrates in the active site. The binding to the substrate triggers the release of the N-terminal region resulting in the activation of the enzyme. Proteolytic cleavage is required for catalytic activity towards large protein substrates. Its function is as follows. Cysteine protease that cleaves specifically after arginine or lysine residues. This Trypanosoma brucei brucei protein is Metacaspase-2.